The primary structure comprises 211 residues: V-type ATP synthase subunit D (211 aa).

This sequence belongs to the V-ATPase D subunit family.

Its function is as follows. Produces ATP from ADP in the presence of a proton gradient across the membrane. This Enterococcus faecalis (strain ATCC 700802 / V583) protein is V-type ATP synthase subunit D.